We begin with the raw amino-acid sequence, 303 residues long: Probable 5-dehydro-4-deoxyglucarate dehydratase (303 aa).

The protein belongs to the DapA family.

It catalyses the reaction 5-dehydro-4-deoxy-D-glucarate + H(+) = 2,5-dioxopentanoate + CO2 + H2O. The protein operates within carbohydrate acid metabolism; D-glucarate degradation; 2,5-dioxopentanoate from D-glucarate: step 2/2. This Delftia acidovorans (strain DSM 14801 / SPH-1) protein is Probable 5-dehydro-4-deoxyglucarate dehydratase.